Here is a 555-residue protein sequence, read N- to C-terminus: MASQASQVLASPHPAISSENRPKADFHPGIWGDMFIICPDTDIDAATELQYEELKAQVRKMIMEPVDDSNQKLPFIDAVQRLGVSYHFEKEIEDELENIYRDTNNNDADTDLYTTALRFRLLREHGFDISCDAFNKFKDEAGNFKASLTSDVQGLLELYEASYMRVHGEDILDEAISFTTAQLTLALPTLHHPLSEQVGHALKQSIRRGLPRVEARNFISIYQDLESHNKSLLQFAKIDFNLLQLLHRKELSEICRWWKDLDFTRKLPFARDRVVEGYFWIMGVYFEPQYSLGRKMLTKVIAMASIVDDTYDSYATYDELIPYTNAIERWDIKCMNQLPNYMKISYKALLNVYEEMEQLLANQGRQYRVEYAKKAMIRLVQAYLLEAKWTHQNYKPTFEEFRDNALPTSGYAMLAITAFVGMGEVITPETFKWAASDPKIIKASTIICRFMDDIAEHKFNHRREDDCSAIECYMKQYGVTAQEAYNEFNKHIESSWKDVNEEFLKPTEMPTPVLCRSLNLARVMDVLYREGDGYTHVGKAAKGGITSLLIDPIQI.

Positions 1-22 (MASQASQVLASPHPAISSENRP) are disordered. Residues Asp-308, Asp-312, Asp-452, and Glu-456 each coordinate Mg(2+). The short motif at 308–312 (DDTYD) is the DDXXD motif element.

It belongs to the terpene synthase family. The cofactor is Mg(2+).

It carries out the reaction (2E,6E)-farnesyl diphosphate = (1S,8aR)-delta-cadinene + diphosphate. Its pathway is secondary metabolite biosynthesis; terpenoid biosynthesis. Its function is as follows. Responsible for the cyclization of trans,trans-farnesyl diphosphate (FPP) to (+)-delta cadinene. This is (+)-delta-cadinene synthase isozyme A (CAD1-A) from Gossypium arboreum (Tree cotton).